The sequence spans 59 residues: Embryonic testis differentiation protein homolog A (59 aa).

Positions 1-10 (MDKEVPKGSP) are enriched in basic and acidic residues. Positions 1-25 (MDKEVPKGSPREPALNIKKSDKSFK) are disordered.

This is Embryonic testis differentiation protein homolog A from Homo sapiens (Human).